The following is a 62-amino-acid chain: E3 SUMO-protein ligase EGR2 (62 aa).

3 C2H2-type zinc fingers span residues 1–21 (AEGCDRRFSASDELTRHIRIH), 27–49 (FQCAICMRNFSRSDHLTTHIRTH), and 55–62 (FACDYCGR).

This sequence belongs to the EGR C2H2-type zinc-finger protein family. As to quaternary structure, interacts with HCFC1. Interacts with WWP2. Interacts with UBC9. Interacts with CITED1. Interacts (via phosphorylated form) with SFN. In terms of processing, ubiquitinated by WWP2 leading to proteasomal degradation. Post-translationally, acetylated. May be deacetylated by HDAC6, HDAC10 or SIRT1.

It localises to the nucleus. Its pathway is protein modification; protein sumoylation. In terms of biological role, sequence-specific DNA-binding transcription factor. Plays a role in hindbrain segmentation by regulating the expression of a subset of homeobox containing genes and in Schwann cell myelination by regulating the expression of genes involved in the formation and maintenance of myelin. Binds to two EGR2-consensus sites EGR2A (5'-CTGTAGGAG-3') and EGR2B (5'-ATGTAGGTG-3') in the HOXB3 enhancer and promotes HOXB3 transcriptional activation. Binds to specific DNA sites located in the promoter region of HOXA4, HOXB2 and ERBB2. Regulates hindbrain segmentation by controlling the expression of Hox genes, such as HOXA4, HOXB3 and HOXB2, and thereby specifying odd and even rhombomeres. Promotes the expression of HOXB3 in the rhombomere r5 in the hindbrain. Regulates myelination in the peripheral nervous system after birth, possibly by regulating the expression of myelin proteins, such as MPZ, and by promoting the differentiation of Schwann cells. Involved in the development of the jaw openener musculature, probably by playing a role in its innervation through trigeminal motor neurons. May play a role in adipogenesis, possibly by regulating the expression of CEBPB. Functionally, E3 SUMO-protein ligase helping SUMO1 conjugation to its coregulators NAB1 and NAB2, whose sumoylation down-regulates EGR2 transcriptional activity. The protein is E3 SUMO-protein ligase EGR2 (EGR2) of Cerdocyon thous (Crab-eating fox).